The primary structure comprises 155 residues: Ribosomal RNA large subunit methyltransferase H (155 aa).

Residues L72, G103, and L122 to F127 contribute to the S-adenosyl-L-methionine site.

This sequence belongs to the RNA methyltransferase RlmH family. Homodimer.

It localises to the cytoplasm. It carries out the reaction pseudouridine(1915) in 23S rRNA + S-adenosyl-L-methionine = N(3)-methylpseudouridine(1915) in 23S rRNA + S-adenosyl-L-homocysteine + H(+). Specifically methylates the pseudouridine at position 1915 (m3Psi1915) in 23S rRNA. The chain is Ribosomal RNA large subunit methyltransferase H from Alkalilimnicola ehrlichii (strain ATCC BAA-1101 / DSM 17681 / MLHE-1).